A 325-amino-acid polypeptide reads, in one-letter code: Serine/threonine-protein phosphatase 2A activator 1 (325 aa).

This sequence belongs to the PTPA-type PPIase family.

Its subcellular location is the cytoplasm. The protein localises to the nucleus. The catalysed reaction is [protein]-peptidylproline (omega=180) = [protein]-peptidylproline (omega=0). In terms of biological role, PPIases accelerate the folding of proteins. It catalyzes the cis-trans isomerization of proline imidic peptide bonds in oligopeptides. Acts as a regulatory subunit for PP2A-like phosphatases modulating their activity or substrate specificity, probably by inducing a conformational change in the catalytic subunit, a direct target of the PPIase. Can reactivate inactive phosphatase PP2A-phosphatase methylesterase complexes (PP2Ai) in presence of ATP and Mg(2+) by dissociating the inactive form from the complex. In Schizosaccharomyces pombe (strain 972 / ATCC 24843) (Fission yeast), this protein is Serine/threonine-protein phosphatase 2A activator 1 (rrd1).